The chain runs to 97 residues: Large ribosomal subunit protein bL28 (97 aa).

Belongs to the bacterial ribosomal protein bL28 family.

In Rickettsia typhi (strain ATCC VR-144 / Wilmington), this protein is Large ribosomal subunit protein bL28.